The following is a 154-amino-acid chain: Insulin-like growth factor 1 (154 aa).

The interval 50-78 is b; the sequence is GPETLCGAELVDALQFVCGDRGFYFNKPT. Intrachain disulfides connect cysteine 55-cysteine 97, cysteine 67-cysteine 110, and cysteine 96-cysteine 101. A c region spans residues 79–90; that stretch reads GYGSSSRRAPQT. The segment at 91 to 111 is a; sequence GIVDECCFRSCDLRRLEMYCA. Residues 112–119 form a d region; sequence PLKAAKSA. Residues 120-154 constitute a propeptide, e peptide; it reads RSVRAQRHTDMPKAQKEVHLKNTSRGSAGNKNYRM. The segment at 121–154 is disordered; the sequence is SVRAQRHTDMPKAQKEVHLKNTSRGSAGNKNYRM. The span at 126–139 shows a compositional bias: basic and acidic residues; the sequence is RHTDMPKAQKEVHL. Over residues 140–154 the composition is skewed to polar residues; it reads KNTSRGSAGNKNYRM.

The protein belongs to the insulin family. Forms a ternary complex with IGFR1 and ITGAV:ITGB3. Forms a ternary complex with IGFR1 and ITGA6:ITGB4. Forms a ternary complex with IGFBP3 and ALS.

Its subcellular location is the secreted. Its function is as follows. The insulin-like growth factors, isolated from plasma, are structurally and functionally related to insulin but have a much higher growth-promoting activity. May be a physiological regulator of [1-14C]-2-deoxy-D-glucose (2DG) transport and glycogen synthesis in osteoblasts. Stimulates glucose transport in bone-derived osteoblastic (PyMS) cells and is effective at much lower concentrations than insulin, not only regarding glycogen and DNA synthesis but also with regard to enhancing glucose uptake. May play a role in synapse maturation. Ca(2+)-dependent exocytosis of IGF1 is required for sensory perception of smell in the olfactory bulb. Acts as a ligand for IGF1R. Binds to the alpha subunit of IGF1R, leading to the activation of the intrinsic tyrosine kinase activity which autophosphorylates tyrosine residues in the beta subunit thus initiating a cascade of down-stream signaling events leading to activation of the PI3K-AKT/PKB and the Ras-MAPK pathways. Binds to integrins ITGAV:ITGB3 and ITGA6:ITGB4. Its binding to integrins and subsequent ternary complex formation with integrins and IGFR1 are essential for IGF1 signaling. Induces the phosphorylation and activation of IGFR1, MAPK3/ERK1, MAPK1/ERK2 and AKT1. As part of the MAPK/ERK signaling pathway, acts as a negative regulator of apoptosis in cardiomyocytes via promotion of STUB1/CHIP-mediated ubiquitination and degradation of ICER-type isoforms of CREM. This is Insulin-like growth factor 1 from Ovis aries (Sheep).